A 486-amino-acid chain; its full sequence is Carboxypeptidase Y homolog ARB_07161 (486 aa).

The first 17 residues, 1 to 17 (MKGLLSLLLVGAANALA), serve as a signal peptide directing secretion. A glycan (N-linked (GlcNAc...) asparagine) is linked at Asn111. Residue Ser241 is part of the active site. 3 disulfides stabilise this stretch: Cys281–Cys305, Cys288–Cys298, and Cys327–Cys334. Asp403 is a catalytic residue. Cys406 contributes to the substrate binding site. An N-linked (GlcNAc...) asparagine glycan is attached at Asn430. The active site involves His462.

It belongs to the peptidase S10 family.

Its subcellular location is the secreted. The enzyme catalyses Release of a C-terminal amino acid with broad specificity.. Its function is as follows. Involved in degradation of small peptides. The polypeptide is Carboxypeptidase Y homolog ARB_07161 (Arthroderma benhamiae (strain ATCC MYA-4681 / CBS 112371) (Trichophyton mentagrophytes)).